We begin with the raw amino-acid sequence, 1088 residues long: Protein argonaute 18 (1088 aa).

The disordered stretch occupies residues 1–220; it reads MASRGGGQHQ…QPPPDLPQAP (220 aa). 6 stretches are compositionally biased toward gly residues: residues 20-30, 51-86, 95-127, 135-148, 161-182, and 191-206; these read GGYGRGGGGGR, YPGG…GQGR, GRGY…GGYH, GRGG…GGGY, ARGG…YGRG, and GRGG…GGGS. Over residues 211–220 the composition is skewed to pro residues; the sequence is QPPPDLPQAP. One can recognise a PAZ domain in the interval 477-574; it reads TVGYFLNNYG…LPMELCNIVP (98 aa). Residues 747-1056 form the Piwi domain; sequence LLLVVMTDDK…LAFRARFYLT (310 aa).

The protein belongs to the argonaute family. Ago subfamily.

Its function is as follows. Probably involved in the RNA silencing pathway. May bind to short RNAs such as microRNAs (miRNAs) or short interfering RNAs (siRNAs), and represses the translation of mRNAs which are complementary to them. The sequence is that of Protein argonaute 18 (AGO18) from Oryza sativa subsp. japonica (Rice).